The primary structure comprises 131 residues: Increased copper sensitivity protein 3 (131 aa).

Transmembrane regions (helical) follow at residues 35–55 (ISVLHLLIATLCTIFFPIFFS) and 74–94 (IALTMSFPLNAIPGMYLIIAF).

It is found in the membrane. This chain is Increased copper sensitivity protein 3 (ICS3), found in Saccharomyces cerevisiae (strain ATCC 204508 / S288c) (Baker's yeast).